Here is an 876-residue protein sequence, read N- to C-terminus: Leucine--tRNA ligase (876 aa).

The short motif at 43–53 (PYPSGRIHMGH) is the 'HIGH' region element. The short motif at 632-636 (KMSKS) is the 'KMSKS' region element. K635 contacts ATP.

This sequence belongs to the class-I aminoacyl-tRNA synthetase family.

The protein resides in the cytoplasm. The catalysed reaction is tRNA(Leu) + L-leucine + ATP = L-leucyl-tRNA(Leu) + AMP + diphosphate. The chain is Leucine--tRNA ligase from Rhizobium etli (strain ATCC 51251 / DSM 11541 / JCM 21823 / NBRC 15573 / CFN 42).